Consider the following 535-residue polypeptide: Pentatricopeptide repeat-containing protein At5g16420, mitochondrial (535 aa).

Residues 1–28 constitute a mitochondrion transit peptide; that stretch reads MFLSRVNPTRFPPFVASRRLFSASASAA. 12 PPR repeats span residues 82–112, 119–153, 154–189, 190–224, 225–259, 260–294, 295–329, 330–364, 365–395, 399–433, 434–468, and 469–503; these read NYDT…LRNS, GENL…GVKR, SVRS…GITP, NIFT…GLVP, NLVT…GWYP, DATT…EIEP, NEVT…SFMP, DSSL…NCMP, DNAL…FEKG, SLLT…KCKP, NAFT…GCFP, and NKTT…GKVD.

It belongs to the PPR family. P subfamily.

It is found in the mitochondrion. This is Pentatricopeptide repeat-containing protein At5g16420, mitochondrial from Arabidopsis thaliana (Mouse-ear cress).